A 360-amino-acid chain; its full sequence is Phospho-N-acetylmuramoyl-pentapeptide-transferase (360 aa).

10 helical membrane-spanning segments follow: residues 21–41 (YITF…LWIG), 73–93 (TMGG…WADL), 98–118 (VWFV…DDYW), 132–152 (WKYF…YAVG), 168–188 (FMPQ…VGTS), 199–219 (GLAI…AWAT), 236–256 (AGEL…FLWY), 263–283 (VFMG…IAVL), 288–308 (LLLV…ILQV), and 338–358 (VIVR…VTLK).

Belongs to the glycosyltransferase 4 family. MraY subfamily. Mg(2+) is required as a cofactor.

The protein resides in the cell inner membrane. It catalyses the reaction UDP-N-acetyl-alpha-D-muramoyl-L-alanyl-gamma-D-glutamyl-meso-2,6-diaminopimeloyl-D-alanyl-D-alanine + di-trans,octa-cis-undecaprenyl phosphate = di-trans,octa-cis-undecaprenyl diphospho-N-acetyl-alpha-D-muramoyl-L-alanyl-D-glutamyl-meso-2,6-diaminopimeloyl-D-alanyl-D-alanine + UMP. Its pathway is cell wall biogenesis; peptidoglycan biosynthesis. In terms of biological role, catalyzes the initial step of the lipid cycle reactions in the biosynthesis of the cell wall peptidoglycan: transfers peptidoglycan precursor phospho-MurNAc-pentapeptide from UDP-MurNAc-pentapeptide onto the lipid carrier undecaprenyl phosphate, yielding undecaprenyl-pyrophosphoryl-MurNAc-pentapeptide, known as lipid I. This Actinobacillus pleuropneumoniae serotype 3 (strain JL03) protein is Phospho-N-acetylmuramoyl-pentapeptide-transferase.